The primary structure comprises 454 residues: GTPase Der (454 aa).

EngA-type G domains lie at P3 to E167 and M181 to M354. GTP-binding positions include G9 to S16, D56 to F60, N119 to E122, G187 to S194, D234 to L238, and N299 to D302. The KH-like domain maps to A355–K439.

It belongs to the TRAFAC class TrmE-Era-EngA-EngB-Septin-like GTPase superfamily. EngA (Der) GTPase family. In terms of assembly, associates with the 50S ribosomal subunit.

In terms of biological role, GTPase that plays an essential role in the late steps of ribosome biogenesis. This is GTPase Der from Polynucleobacter asymbioticus (strain DSM 18221 / CIP 109841 / QLW-P1DMWA-1) (Polynucleobacter necessarius subsp. asymbioticus).